Consider the following 177-residue polypeptide: Voltage-dependent L-type calcium channel subunit alpha-1C (177 aa).

The chain crosses the membrane as a helical span at residues 27–45 (ITFFRLFRVMRLVKLLSRG). The chain crosses the membrane as a helical span at residues 64–84 (YVALLIVMLFFIYAVIGMQVF). N90 is a glycosylation site (N-linked (GlcNAc...) asparagine). Residues 107–125 (AVLLLFRCATGEAWQEIML) constitute an intramembrane region (pore-forming). The short motif at 116-119 (TGEA) is the Selectivity filter of repeat IV element. C133 and C149 are oxidised to a cystine. Residue N141 is glycosylated (N-linked (GlcNAc...) asparagine). Residues 154–177 (AVFYFISFYMLCAFLIIDLFVAVI) form a helical membrane-spanning segment.

The protein belongs to the calcium channel alpha-1 subunit (TC 1.A.1.11) family. CACNA1C subfamily. As to quaternary structure, component of a calcium channel complex consisting of a pore-forming alpha subunit (CACNA1C) and ancillary beta, gamma and delta subunits. The channel complex contains alpha, beta, gamma and delta subunits in a 1:1:1:1 ratio, i.e. it contains only one of each type of subunit. CACNA1C channel activity is modulated by ancillary subunits, such as CACNB2, CACNB3, CACNA2D1 and CACNA2D4. Phosphorylation by PKA activates the channel.

It localises to the cell membrane. The protein resides in the perikaryon. The protein localises to the postsynaptic density membrane. Its subcellular location is the cell projection. It is found in the dendrite. It localises to the sarcolemma. The protein resides in the T-tubule. It carries out the reaction Ca(2+)(in) = Ca(2+)(out). Inhibited by dihydropyridines (DHP), such as isradipine. Channel activity is regulated by Ca(2+) and calmodulin. Functionally, pore-forming, alpha-1C subunit of the voltage-gated calcium channel that gives rise to L-type calcium currents. Mediates influx of calcium ions into the cytoplasm, and thereby triggers calcium release from the sarcoplasm. Plays an important role in excitation-contraction coupling in the heart. Required for normal heart development and normal regulation of heart rhythm. Required for normal contraction of smooth muscle cells in blood vessels and in the intestine. Essential for normal blood pressure regulation via its role in the contraction of arterial smooth muscle cells. Long-lasting (L-type) calcium channels belong to the 'high-voltage activated' (HVA) group. The polypeptide is Voltage-dependent L-type calcium channel subunit alpha-1C (CACNA1C) (Gallus gallus (Chicken)).